Consider the following 211-residue polypeptide: tRNA (guanine-N(7)-)-methyltransferase (211 aa).

S-adenosyl-L-methionine is bound by residues Glu-43, Glu-68, Asp-95, and Asp-117. Asp-117 is an active-site residue. Residues Lys-121, Asp-153, and 190–193 (TEYE) contribute to the substrate site.

The protein belongs to the class I-like SAM-binding methyltransferase superfamily. TrmB family.

The catalysed reaction is guanosine(46) in tRNA + S-adenosyl-L-methionine = N(7)-methylguanosine(46) in tRNA + S-adenosyl-L-homocysteine. It functions in the pathway tRNA modification; N(7)-methylguanine-tRNA biosynthesis. In terms of biological role, catalyzes the formation of N(7)-methylguanine at position 46 (m7G46) in tRNA. The chain is tRNA (guanine-N(7)-)-methyltransferase from Staphylococcus carnosus (strain TM300).